Reading from the N-terminus, the 51-residue chain is Small ribosomal subunit protein eS31 (51 aa).

Zn(2+) contacts are provided by Cys-22, Cys-25, Cys-40, and Cys-43. Residues 22–43 (CPRCGPGVFMADHGDRWACGRC) form a C4-type zinc finger.

This sequence belongs to the eukaryotic ribosomal protein eS31 family. As to quaternary structure, part of the 30S ribosomal subunit. Zn(2+) is required as a cofactor.

The chain is Small ribosomal subunit protein eS31 from Pyrococcus abyssi (strain GE5 / Orsay).